Consider the following 31-residue polypeptide: Cytochrome b6-f complex subunit 6 (31 aa).

A helical transmembrane segment spans residues 3 to 23; that stretch reads TIISYFGFLLASIIFTLILFI.

Belongs to the PetL family. As to quaternary structure, the 4 large subunits of the cytochrome b6-f complex are cytochrome b6, subunit IV (17 kDa polypeptide, PetD), cytochrome f and the Rieske protein, while the 4 small subunits are PetG, PetL, PetM and PetN. The complex functions as a dimer.

It is found in the plastid. The protein resides in the chloroplast thylakoid membrane. In terms of biological role, component of the cytochrome b6-f complex, which mediates electron transfer between photosystem II (PSII) and photosystem I (PSI), cyclic electron flow around PSI, and state transitions. PetL is important for photoautotrophic growth as well as for electron transfer efficiency and stability of the cytochrome b6-f complex. This chain is Cytochrome b6-f complex subunit 6, found in Abies homolepis (Nikko fir).